The sequence spans 242 residues: Probable transcriptional regulatory protein NMB1648 (242 aa).

Belongs to the TACO1 family.

It localises to the cytoplasm. The polypeptide is Probable transcriptional regulatory protein NMB1648 (Neisseria meningitidis serogroup B (strain ATCC BAA-335 / MC58)).